Consider the following 400-residue polypeptide: NADH dehydrogenase-like protein Rv1812c (400 aa).

This sequence belongs to the NADH dehydrogenase family. FAD serves as cofactor.

This is NADH dehydrogenase-like protein Rv1812c from Mycobacterium tuberculosis (strain ATCC 25618 / H37Rv).